The following is a 314-amino-acid chain: Cyclic di-GMP binding protein TDE_0214 (314 aa).

Residues 146–234 enclose the PilZ domain; that stretch reads QKRRNERVVI…KTVRTEPVEG (89 aa). Polar residues predominate over residues 288-300; sequence TPVSSPIGTNTAP. The segment at 288 to 314 is disordered; sequence TPVSSPIGTNTAPLTPPPADSAPEQIS.

Its function is as follows. Cyclic-di-GMP binding protein that plays important roles in motility, chemotaxis, biofilm formation and virulence. The chain is Cyclic di-GMP binding protein TDE_0214 from Treponema denticola (strain ATCC 35405 / DSM 14222 / CIP 103919 / JCM 8153 / KCTC 15104).